A 122-amino-acid polypeptide reads, in one-letter code: Large ribosomal subunit protein bL12 (122 aa).

The protein belongs to the bacterial ribosomal protein bL12 family. Homodimer. Part of the ribosomal stalk of the 50S ribosomal subunit. Forms a multimeric L10(L12)X complex, where L10 forms an elongated spine to which 2 to 4 L12 dimers bind in a sequential fashion. Binds GTP-bound translation factors.

Forms part of the ribosomal stalk which helps the ribosome interact with GTP-bound translation factors. Is thus essential for accurate translation. This Actinobacillus pleuropneumoniae serotype 5b (strain L20) protein is Large ribosomal subunit protein bL12.